The chain runs to 63 residues: Small ribosomal subunit protein bS21 (63 aa).

Belongs to the bacterial ribosomal protein bS21 family.

In Phocaeicola vulgatus (strain ATCC 8482 / DSM 1447 / JCM 5826 / CCUG 4940 / NBRC 14291 / NCTC 11154) (Bacteroides vulgatus), this protein is Small ribosomal subunit protein bS21.